The chain runs to 623 residues: Endoglucanase 7 (623 aa).

The Cytoplasmic segment spans residues 1-79; sequence MHPGNVWGGS…LGCVSVSRTV (79 aa). The helical; Signal-anchor for type II membrane protein transmembrane segment at 80–100 threads the bilayer; that stretch reads FLWTVGSIAVLFLVVALPIII. Topologically, residues 101–623 are extracellular; it reads VKSLPRHKSA…TPPPPKAWKP (523 aa). N-linked (GlcNAc...) asparagine glycosylation is found at Asn-116, Asn-221, Asn-328, Asn-349, Asn-412, Asn-429, and Asn-464. The active site involves His-517. The N-linked (GlcNAc...) asparagine glycan is linked to Asn-548. Asp-565 is an active-site residue. A glycan (N-linked (GlcNAc...) asparagine) is linked at Asn-571. Glu-574 is a catalytic residue.

The protein belongs to the glycosyl hydrolase 9 (cellulase E) family. Expressed in basal region of leaf blade and proximal parts of leaf and floral organ.

It localises to the membrane. The enzyme catalyses Endohydrolysis of (1-&gt;4)-beta-D-glucosidic linkages in cellulose, lichenin and cereal beta-D-glucans.. The polypeptide is Endoglucanase 7 (KOR2) (Arabidopsis thaliana (Mouse-ear cress)).